A 393-amino-acid polypeptide reads, in one-letter code: Acetylornithine aminotransferase (393 aa).

Pyridoxal 5'-phosphate-binding positions include 102–103 (GA) and F136. R139 lines the N(2)-acetyl-L-ornithine pocket. Pyridoxal 5'-phosphate is bound at residue 219 to 222 (DEVQ). An N6-(pyridoxal phosphate)lysine modification is found at K248. N(2)-acetyl-L-ornithine is bound at residue S274. T275 is a binding site for pyridoxal 5'-phosphate.

This sequence belongs to the class-III pyridoxal-phosphate-dependent aminotransferase family. ArgD subfamily. In terms of assembly, homodimer. Pyridoxal 5'-phosphate is required as a cofactor.

The protein localises to the cytoplasm. The enzyme catalyses N(2)-acetyl-L-ornithine + 2-oxoglutarate = N-acetyl-L-glutamate 5-semialdehyde + L-glutamate. Its pathway is amino-acid biosynthesis; L-arginine biosynthesis; N(2)-acetyl-L-ornithine from L-glutamate: step 4/4. The chain is Acetylornithine aminotransferase from Wolinella succinogenes (strain ATCC 29543 / DSM 1740 / CCUG 13145 / JCM 31913 / LMG 7466 / NCTC 11488 / FDC 602W) (Vibrio succinogenes).